Here is a 257-residue protein sequence, read N- to C-terminus: Imidazole glycerol phosphate synthase subunit HisF (257 aa).

Active-site residues include D11 and D130.

The protein belongs to the HisA/HisF family. In terms of assembly, heterodimer of HisH and HisF.

The protein localises to the cytoplasm. The catalysed reaction is 5-[(5-phospho-1-deoxy-D-ribulos-1-ylimino)methylamino]-1-(5-phospho-beta-D-ribosyl)imidazole-4-carboxamide + L-glutamine = D-erythro-1-(imidazol-4-yl)glycerol 3-phosphate + 5-amino-1-(5-phospho-beta-D-ribosyl)imidazole-4-carboxamide + L-glutamate + H(+). The protein operates within amino-acid biosynthesis; L-histidine biosynthesis; L-histidine from 5-phospho-alpha-D-ribose 1-diphosphate: step 5/9. Functionally, IGPS catalyzes the conversion of PRFAR and glutamine to IGP, AICAR and glutamate. The HisF subunit catalyzes the cyclization activity that produces IGP and AICAR from PRFAR using the ammonia provided by the HisH subunit. This Actinobacillus pleuropneumoniae serotype 7 (strain AP76) protein is Imidazole glycerol phosphate synthase subunit HisF.